The sequence spans 362 residues: Phosphoserine aminotransferase (362 aa).

R43 is an L-glutamate binding site. Residues 77–78 (AT), W103, T153, D173, and Q196 contribute to the pyridoxal 5'-phosphate site. Residue K197 is modified to N6-(pyridoxal phosphate)lysine. 238-239 (NT) is a pyridoxal 5'-phosphate binding site.

It belongs to the class-V pyridoxal-phosphate-dependent aminotransferase family. SerC subfamily. Homodimer. Pyridoxal 5'-phosphate serves as cofactor.

The protein resides in the cytoplasm. It carries out the reaction O-phospho-L-serine + 2-oxoglutarate = 3-phosphooxypyruvate + L-glutamate. The catalysed reaction is 4-(phosphooxy)-L-threonine + 2-oxoglutarate = (R)-3-hydroxy-2-oxo-4-phosphooxybutanoate + L-glutamate. Its pathway is amino-acid biosynthesis; L-serine biosynthesis; L-serine from 3-phospho-D-glycerate: step 2/3. It functions in the pathway cofactor biosynthesis; pyridoxine 5'-phosphate biosynthesis; pyridoxine 5'-phosphate from D-erythrose 4-phosphate: step 3/5. In terms of biological role, catalyzes the reversible conversion of 3-phosphohydroxypyruvate to phosphoserine and of 3-hydroxy-2-oxo-4-phosphonooxybutanoate to phosphohydroxythreonine. In Xylella fastidiosa (strain Temecula1 / ATCC 700964), this protein is Phosphoserine aminotransferase.